A 1092-amino-acid chain; its full sequence is NAD-specific glutamate dehydrogenase (1092 aa).

Lysine 626 is a catalytic residue.

The protein belongs to the Glu/Leu/Phe/Val dehydrogenases family. Homotetramer. Interacts with NNK1. Post-translationally, phosphorylated by a complex containing the NNK1 kinase.

It catalyses the reaction L-glutamate + NAD(+) + H2O = 2-oxoglutarate + NH4(+) + NADH + H(+). Functionally, NAD(+)-dependent glutamate dehydrogenase which degrades glutamate to ammonia and alpha-ketoglutarate. This chain is NAD-specific glutamate dehydrogenase (GDH2), found in Saccharomyces cerevisiae (strain ATCC 204508 / S288c) (Baker's yeast).